A 467-amino-acid polypeptide reads, in one-letter code: Iroquois-class homeodomain protein irx-1-A (467 aa).

Residues 126-188 (DPGRPKNATR…NARRRLKKEN (63 aa)) constitute a DNA-binding region (homeobox; TALE-type). Disordered regions lie at residues 197–306 (KEDD…PPHS), 318–344 (TSPD…QHPA), and 410–467 (SLSS…LPSA). 2 stretches are compositionally biased toward acidic residues: residues 215–225 (EDDEEIDLESI) and 233–244 (NDGEQSNEEEDE). Basic and acidic residues predominate over residues 245-262 (KLEHLRQGEKESLKKESE). Over residues 415 to 431 (KTPERTSPKHSDRENVP) the composition is skewed to basic and acidic residues. Residues 447 to 460 (RENTLSQQEGTSRI) show a composition bias toward polar residues.

It belongs to the TALE/IRO homeobox family. Expressed early in neural differentiation in the neural plate, and expression continues in the neural tube after neural fold closure. Expressed in the presumptive midbrain territory. Also expressed in the prospective neural crest and the preplacodal field, anterior to the neural plate. Strongly expressed in the profundal placode and weakly expressed in the trigeminal placode. Also expressed in the mesoderm in the Spemann organizer from the start of gastrulation, and subsequently in its derivatives; namely in the notochord as well as in the somites of stage 25 embryos, and the somites and notochord of tailbud embryos. Also expressed in specific and overlapping dynamic patterns with irx2 and irx3 during pronephric kidney development. Renal expression begins in the dorsal region of the pronephric anlage at mid neurula stage and continues to at least tailbud stages where expression is confined to the intermediate tubule segment IT1. Renal expression is maintained at tadpole stages.

Its subcellular location is the nucleus. Functionally, acts partially redundantly with other irx members in neural patterning. Required for formation of the posterior forebrain, midbrain, hindbrain, and to a lesser extent, spinal cord. Acts early in neural plate development to induce expression of some but not all proneural genes, and specify a neural precursor state. Also up-regulates repressors that prevent neuronal differentiation. Patterns the neuroectoderm in both the anterior/posterior and dorsal/ventral axes. Acts primarily as a transcriptional repressor during neural development, and binds to the bmp4 promoter to repress gene expression and thus mediate down-regulation of bmp4 by wnt signaling. Controls multiple processes through bmp4-repression including neural plate development, neural crest specification and Spemann organizer development. Involved in the specification of the preplacodal field at the anterior border of the neural plate. Regulates the genetic cascade of interactions that are necessary for positioning the isthmus organizer and the formation of the midbrain-hindbrain boundary. Required during at least two stages of pronephros kidney development; during neurula stages, maintains transcription of key renal genes to define the size and identity of the pronephric anlage, probably in part through regulation of bmp-signaling. Subsequently required for proper formation of the intermediate tubule segment of the pronephros. Acts principally as a transcriptional activator during pronephros development. The chain is Iroquois-class homeodomain protein irx-1-A (irx1-a) from Xenopus laevis (African clawed frog).